Reading from the N-terminus, the 37-residue chain is Large ribosomal subunit protein bL36 (37 aa).

Belongs to the bacterial ribosomal protein bL36 family.

This is Large ribosomal subunit protein bL36 from Endomicrobium trichonymphae.